We begin with the raw amino-acid sequence, 357 residues long: Homoserine kinase (357 aa).

The protein belongs to the GHMP kinase family. Homoserine kinase subfamily. Homodimer.

The catalysed reaction is L-homoserine + ATP = O-phospho-L-homoserine + ADP + H(+). Its pathway is amino-acid biosynthesis; L-threonine biosynthesis; L-threonine from L-aspartate: step 4/5. Commits homoserine to the threonine biosynthesis pathway by catalyzing its O-phosphorylation. The sequence is that of Homoserine kinase (THR1) from Candida albicans (strain SC5314 / ATCC MYA-2876) (Yeast).